The primary structure comprises 238 residues: Carboxymethylenebutenolidase (238 aa).

Catalysis depends on residues cysteine 123, aspartate 171, and histidine 201.

The protein belongs to the dienelactone hydrolase family. In terms of assembly, monomer.

The catalysed reaction is 2-(5-oxo-2,5-dihydrofuran-2-ylidene)acetate + H2O = 4-oxohex-2-enedioate + H(+). It participates in aromatic compound metabolism; 3-chlorocatechol degradation. Functionally, ring cleavage of cyclic ester dienelactone to produce maleylacetate. The polypeptide is Carboxymethylenebutenolidase (tcbE) (Pseudomonas sp. (strain P51)).